The sequence spans 557 residues: NAD(P)H-quinone oxidoreductase chain 4 (557 aa).

The next 14 membrane-spanning stretches (helical) occupy residues 25-45, 57-77, 111-131, 133-153, 157-177, 189-209, 230-250, 264-284, 298-318, 327-347, 353-373, 397-417, 438-458, and 485-505; these read FPWL…VPFI, YALF…LKGF, LILL…PVSF, PKLF…VFAV, LLFF…LAIW, FIIY…AMGF, GFQL…LPIV, TAPV…YALL, FAPL…LTSF, IAYS…SFST, AMLQ…LVGA, FALW…SGFV, IVIA…LLSM, and IYII…PRIM.

The protein belongs to the complex I subunit 4 family.

It is found in the cellular thylakoid membrane. The catalysed reaction is a plastoquinone + NADH + (n+1) H(+)(in) = a plastoquinol + NAD(+) + n H(+)(out). It catalyses the reaction a plastoquinone + NADPH + (n+1) H(+)(in) = a plastoquinol + NADP(+) + n H(+)(out). Functionally, NDH-1 shuttles electrons from NAD(P)H, via FMN and iron-sulfur (Fe-S) centers, to quinones in the respiratory chain. The immediate electron acceptor for the enzyme in this species is believed to be plastoquinone. Couples the redox reaction to proton translocation (for every two electrons transferred, four hydrogen ions are translocated across the cytoplasmic membrane), and thus conserves the redox energy in a proton gradient. The sequence is that of NAD(P)H-quinone oxidoreductase chain 4 from Prochlorococcus marinus (strain SARG / CCMP1375 / SS120).